The chain runs to 394 residues: Chorismate synthase (394 aa).

Residue Arg-62 coordinates NADP(+). FMN contacts are provided by residues 144-146, Gly-307, 322-326, and Arg-349; these read RAS and KPTPT.

The protein belongs to the chorismate synthase family. As to quaternary structure, homotetramer. The cofactor is FMNH2.

The catalysed reaction is 5-O-(1-carboxyvinyl)-3-phosphoshikimate = chorismate + phosphate. It functions in the pathway metabolic intermediate biosynthesis; chorismate biosynthesis; chorismate from D-erythrose 4-phosphate and phosphoenolpyruvate: step 7/7. Catalyzes the anti-1,4-elimination of the C-3 phosphate and the C-6 proR hydrogen from 5-enolpyruvylshikimate-3-phosphate (EPSP) to yield chorismate, which is the branch point compound that serves as the starting substrate for the three terminal pathways of aromatic amino acid biosynthesis. This reaction introduces a second double bond into the aromatic ring system. In Acetivibrio thermocellus (strain ATCC 27405 / DSM 1237 / JCM 9322 / NBRC 103400 / NCIMB 10682 / NRRL B-4536 / VPI 7372) (Clostridium thermocellum), this protein is Chorismate synthase.